The sequence spans 195 residues: Peptidyl-tRNA hydrolase (195 aa).

Y17 contacts tRNA. H22 (proton acceptor) is an active-site residue. TRNA-binding residues include Y68, N70, and N116.

It belongs to the PTH family. As to quaternary structure, monomer.

Its subcellular location is the cytoplasm. It carries out the reaction an N-acyl-L-alpha-aminoacyl-tRNA + H2O = an N-acyl-L-amino acid + a tRNA + H(+). Functionally, hydrolyzes ribosome-free peptidyl-tRNAs (with 1 or more amino acids incorporated), which drop off the ribosome during protein synthesis, or as a result of ribosome stalling. In terms of biological role, catalyzes the release of premature peptidyl moieties from peptidyl-tRNA molecules trapped in stalled 50S ribosomal subunits, and thus maintains levels of free tRNAs and 50S ribosomes. The protein is Peptidyl-tRNA hydrolase of Shewanella oneidensis (strain ATCC 700550 / JCM 31522 / CIP 106686 / LMG 19005 / NCIMB 14063 / MR-1).